Consider the following 473-residue polypeptide: Fumarate hydratase class II (473 aa).

Substrate-binding positions include 104 to 106, 128 to 131, 138 to 140, and T186; these read SGT, HPND, and SSN. Residue H187 is the Proton donor/acceptor of the active site. S318 is an active-site residue. Substrate is bound by residues S319 and 324–326; that span reads KVN.

This sequence belongs to the class-II fumarase/aspartase family. Fumarase subfamily. As to quaternary structure, homotetramer.

Its subcellular location is the cytoplasm. The enzyme catalyses (S)-malate = fumarate + H2O. It functions in the pathway carbohydrate metabolism; tricarboxylic acid cycle; (S)-malate from fumarate: step 1/1. Its function is as follows. Involved in the TCA cycle. Catalyzes the stereospecific interconversion of fumarate to L-malate. In Corynebacterium efficiens (strain DSM 44549 / YS-314 / AJ 12310 / JCM 11189 / NBRC 100395), this protein is Fumarate hydratase class II.